Reading from the N-terminus, the 263-residue chain is MTDIRLYMLQSGTLKCKVHNIKMNQGNGADYEIPVPFYLITHPDGHTIIDGGNAIEVATDPRGHWGGICDVYWPVLDKDKGCVDQVKALGFDPAEVRYVVQSHLHLDHTGAIGRFPNATHIVQRAEYEYAFTPDWFAGGGYIRKDFDRPGLKWQFLNGTQDDFYDVYGDGTLTTIFSPGHAMGHQSFLVRLPSSEPLLLTIDAAYTLDHWEEKALPGFLASTVDTVRSVQKLRTIAERTGANVVTGHDPAAWSTFKKAPEYYS.

Residues His103, His105, Asp107, His108, His180, Asp202, and His247 each coordinate Zn(2+).

Belongs to the metallo-beta-lactamase superfamily. Requires Zn(2+) as cofactor.

The catalysed reaction is an N-acyl-L-homoserine lactone + H2O = an N-acyl-L-homoserine + H(+). The protein is N-acyl homoserine lactonase AttM of Rhizobium johnstonii (strain DSM 114642 / LMG 32736 / 3841) (Rhizobium leguminosarum bv. viciae).